We begin with the raw amino-acid sequence, 122 residues long: Large ribosomal subunit protein uL14 (122 aa).

It belongs to the universal ribosomal protein uL14 family. In terms of assembly, part of the 50S ribosomal subunit. Forms a cluster with proteins L3 and L19. In the 70S ribosome, L14 and L19 interact and together make contacts with the 16S rRNA in bridges B5 and B8.

Binds to 23S rRNA. Forms part of two intersubunit bridges in the 70S ribosome. The sequence is that of Large ribosomal subunit protein uL14 from Afipia carboxidovorans (strain ATCC 49405 / DSM 1227 / KCTC 32145 / OM5) (Oligotropha carboxidovorans).